We begin with the raw amino-acid sequence, 378 residues long: Glutamate 5-kinase (378 aa).

Lysine 21 contributes to the ATP binding site. Serine 61, aspartate 148, and asparagine 160 together coordinate substrate. 180-181 (TD) lines the ATP pocket. The PUA domain maps to 286–364 (RGTLVLDAGA…RRIEELLGYM (79 aa)).

This sequence belongs to the glutamate 5-kinase family.

The protein resides in the cytoplasm. It carries out the reaction L-glutamate + ATP = L-glutamyl 5-phosphate + ADP. Its pathway is amino-acid biosynthesis; L-proline biosynthesis; L-glutamate 5-semialdehyde from L-glutamate: step 1/2. Catalyzes the transfer of a phosphate group to glutamate to form L-glutamate 5-phosphate. In Chromohalobacter salexigens (strain ATCC BAA-138 / DSM 3043 / CIP 106854 / NCIMB 13768 / 1H11), this protein is Glutamate 5-kinase.